The chain runs to 306 residues: UDP-3-O-acyl-N-acetylglucosamine deacetylase (306 aa).

Zn(2+) is bound by residues histidine 79, histidine 238, and aspartate 242. Residue histidine 265 is the Proton donor of the active site.

The protein belongs to the LpxC family. Zn(2+) serves as cofactor.

The catalysed reaction is a UDP-3-O-[(3R)-3-hydroxyacyl]-N-acetyl-alpha-D-glucosamine + H2O = a UDP-3-O-[(3R)-3-hydroxyacyl]-alpha-D-glucosamine + acetate. It participates in glycolipid biosynthesis; lipid IV(A) biosynthesis; lipid IV(A) from (3R)-3-hydroxytetradecanoyl-[acyl-carrier-protein] and UDP-N-acetyl-alpha-D-glucosamine: step 2/6. In terms of biological role, catalyzes the hydrolysis of UDP-3-O-myristoyl-N-acetylglucosamine to form UDP-3-O-myristoylglucosamine and acetate, the committed step in lipid A biosynthesis. This is UDP-3-O-acyl-N-acetylglucosamine deacetylase from Yersinia pseudotuberculosis serotype O:1b (strain IP 31758).